The sequence spans 348 residues: Rhodopsin (348 aa).

Met1 is modified (N-acetylmethionine). The Extracellular segment spans residues 1–36 (MNGTEGPNFYVPFSNVTGVVRSPFEQPQYYLAEPWQ). N-linked (GlcNAc...) asparagine glycosylation is found at Asn2 and Asn15. The helical transmembrane segment at 37-61 (FSMLAAYMFLLIVLGFPINFLTLYV) threads the bilayer. Residues 62-73 (TVQHKKLRTPLN) are Cytoplasmic-facing. The helical transmembrane segment at 74–96 (YILLNLAVADLFMVFGGFTTTLY) threads the bilayer. Over 97-110 (TSLHGYFVFGPTGC) the chain is Extracellular. Cys110 and Cys187 are disulfide-bonded. The chain crosses the membrane as a helical span at residues 111–133 (NLEGFFATLGGEIALWSLVVLAI). The short motif at 134–136 (ERY) is the 'Ionic lock' involved in activated form stabilization element. The Cytoplasmic segment spans residues 134 to 152 (ERYVVVCKPMSNFRFGENH). A helical transmembrane segment spans residues 153 to 173 (AIMGVVFTWIMALACAAPPLV). The Extracellular portion of the chain corresponds to 174-202 (GWSRYIPEGMQCSCGIDYYTLKPEVNNES). Glu201 contributes to the Zn(2+) binding site. Residues 203 to 224 (FVIYMFVVHFTIPMIVIFFCYG) traverse the membrane as a helical segment. Residues 225-252 (QLVFTVKEAAAQQQESATTQKAEKEVTR) lie on the Cytoplasmic side of the membrane. A helical membrane pass occupies residues 253-274 (MVIIMVIFFLICWLPYASVAFY). Topologically, residues 275–286 (IFTHQGSNFGPI) are extracellular. Gln279 is a binding site for Zn(2+). Residues 287–308 (FMTLPAFFAKSSSIYNPVIYIM) form a helical membrane-spanning segment. The residue at position 296 (Lys296) is an N6-(retinylidene)lysine. Topologically, residues 309-348 (LNKQFRNCMLTTLCCGKNPLGDDDASATASKTETSQVAPA) are cytoplasmic. Residues Cys322 and Cys323 are each lipidated (S-palmitoyl cysteine). The interval 330–348 (DDDASATASKTETSQVAPA) is interaction with SAG. The residue at position 334 (Ser334) is a Phosphoserine. Phosphothreonine is present on Thr336. Ser338 bears the Phosphoserine mark. Phosphothreonine occurs at positions 340 and 342. Ser343 carries the phosphoserine modification.

This sequence belongs to the G-protein coupled receptor 1 family. Opsin subfamily. In terms of assembly, homodimer. May form a complex composed of RHO, GRK1 and RCVRN in a Ca(2+)-dependent manner; RCVRN prevents the interaction between GRK1 and RHO. Interacts with GRK1. Interacts (phosphorylated form) with SAG. Interacts with GNAT1. Interacts with GNAT3. SAG and G-proteins compete for a common binding site. Interacts with PRCD; the interaction promotes PRCD stability. Forms a complex with ASAP1 and ARF4. Forms a complex with ASAP1, RAB11A, Rabin8/RAB3IP, ARF4 and RAB11FIP3; the complex regulates Golgi-to-cilia rhodopsin/RHO transport in photoreceptors. In terms of processing, phosphorylated on some or all of the serine and threonine residues present in the C-terminal region. Contains one covalently linked retinal chromophore. Upon light absorption, the covalently bound 11-cis-retinal is converted to all-trans-retinal. After hydrolysis of the Schiff base and release of the covalently bound all-trans-retinal, active rhodopsin is regenerated by binding of a fresh molecule of 11-cis-retinal. Rod-shaped photoreceptor cells in the retina (at protein level).

It localises to the membrane. It is found in the cell projection. Its subcellular location is the cilium. The protein localises to the photoreceptor outer segment. Functionally, photoreceptor required for image-forming vision at low light intensity. Required for photoreceptor cell viability after birth. Light-induced isomerization of 11-cis to all-trans retinal triggers a conformational change that activates signaling via G-proteins. Subsequent receptor phosphorylation mediates displacement of the bound G-protein alpha subunit by the arrestin SAG and terminates signaling. The sequence is that of Rhodopsin (Rho) from Mus musculus (Mouse).